We begin with the raw amino-acid sequence, 144 residues long: Sirohydrochlorin cobaltochelatase (144 aa).

Histidine 9 (proton acceptor) is an active-site residue. Residue histidine 9 participates in Co(2+) binding. Ni(2+) is bound at residue histidine 9. Substrate contacts are provided by residues glutamate 45 and 70–75 (LAPGNH). Residue histidine 75 participates in Co(2+) binding. Histidine 75 contacts Ni(2+). The disordered stretch occupies residues 89 to 112 (GDDEGGHHHHHDHEHHHHHHDTTA). Over residues 95–108 (HHHHHDHEHHHHHH) the composition is skewed to basic residues.

It belongs to the CbiX family. CbiXS subfamily. As to quaternary structure, homotetramer; dimer of dimers.

The enzyme catalyses Co-sirohydrochlorin + 2 H(+) = sirohydrochlorin + Co(2+). It carries out the reaction Ni-sirohydrochlorin + 2 H(+) = sirohydrochlorin + Ni(2+). It functions in the pathway cofactor biosynthesis; adenosylcobalamin biosynthesis; cob(II)yrinate a,c-diamide from sirohydrochlorin (anaerobic route): step 1/10. In terms of biological role, catalyzes the insertion of Co(2+) into sirohydrochlorin as part of the anaerobic pathway to cobalamin biosynthesis. Involved in the biosynthesis of the unique nickel-containing tetrapyrrole coenzyme F430, the prosthetic group of methyl-coenzyme M reductase (MCR), which plays a key role in methanogenesis and anaerobic methane oxidation. Catalyzes the insertion of Ni(2+) into sirohydrochlorin to yield Ni-sirohydrochlorin. The sequence is that of Sirohydrochlorin cobaltochelatase from Methanococcus maripaludis (strain DSM 14266 / JCM 13030 / NBRC 101832 / S2 / LL).